Reading from the N-terminus, the 978-residue chain is Chaperone protein ClpB2, chloroplastic (978 aa).

A chloroplast-targeting transit peptide spans 1 to 76 (MAAAPPLAAG…RMPPRTLSVR (76 aa)). A Clp R domain is found at 85-229 (TQQEFTEMAW…KTAIESIRGK (145 aa)). Repeat regions lie at residues 89-154 (FTEM…IQRQ) and 166-229 (LGRD…IRGK). The segment at 244–492 (LDKYGKDLTA…KLKMEITSKP (249 aa)) is i. ATP contacts are provided by residues 289–296 (GEPGVGKT) and 692–699 (GPTGVGKT). Residues 618 to 809 (VTQDDIAEIV…IIIMTSNVGS (192 aa)) form an II region.

It belongs to the ClpA/ClpB family.

The protein localises to the plastid. It localises to the chloroplast. Molecular chaperone that may play a role in chloroplast development. This is Chaperone protein ClpB2, chloroplastic (CLPB2) from Oryza sativa subsp. japonica (Rice).